The chain runs to 676 residues: Exostosin-like 1 (676 aa).

The Cytoplasmic portion of the chain corresponds to 1-9 (MQSWRRRKS). The chain crosses the membrane as a helical; Signal-anchor for type II membrane protein span at residues 10 to 30 (LWLALSASWLLLVLLGGFSLL). The Lumenal segment spans residues 31–676 (RLALPPRPRP…RKKYRSLEKP (646 aa)). Positions 238-264 (TADTGSSACPWDGRCEQDPGPGQTQRQ) are disordered. Residue asparagine 269 is glycosylated (N-linked (GlcNAc...) asparagine). Residues cysteine 584 and cysteine 634 are joined by a disulfide bond. The tract at residues 610–631 (RQEAAPLAPGGPGPRPKPPAPA) is disordered. The span at 618-631 (PGGPGPRPKPPAPA) shows a compositional bias: pro residues.

Belongs to the glycosyltransferase 47 family.

Its subcellular location is the endoplasmic reticulum membrane. The catalysed reaction is 3-O-{[(1-&gt;4)-beta-D-GlcA-(1-&gt;4)-alpha-D-GlcNAc](n)-(1-&gt;4)-beta-D-GlcA-(1-&gt;3)-beta-D-Gal-(1-&gt;3)-beta-D-Gal-(1-&gt;4)-beta-D-Xyl}-L-seryl-[protein] + UDP-N-acetyl-alpha-D-glucosamine = 3-O-{alpha-D-GlcNAc-[(1-&gt;4)-beta-D-GlcA-(1-&gt;4)-alpha-D-GlcNAc](n)-(1-&gt;4)-beta-D-GlcA-(1-&gt;3)-beta-D-Gal-(1-&gt;3)-beta-D-Gal-(1-&gt;4)-beta-D-Xyl}-L-seryl-[protein] + UDP + H(+). It functions in the pathway protein modification; protein glycosylation. Its function is as follows. Glycosyltransferase required for the biosynthesis of heparan-sulfate (HS). Transfers N-acetyl-alpha-D-glucosamine to the nascent HS chain (GlcNAcT-II activity). Appears to lack GlcNAcT I and GlcAT-II activities. The polypeptide is Exostosin-like 1 (EXTL1) (Homo sapiens (Human)).